Here is a 1298-residue protein sequence, read N- to C-terminus: Phosphoribosylformylglycinamidine synthase (1298 aa).

The tract at residues 298 to 328 (TAIAPFPGASTGSGGEIRDEGATGRGAKPKA) is disordered. Residues 305 to 316 (GASTGSGGEIRD), 384 to 386 (TGY), and Ala676 each bind ATP. The Mg(2+) site is built by Asp677, Glu716, Asn720, and Asp884. ATP is bound at residue Ser886. The region spanning 1045-1298 (VAILREQGVN…MFRNARVWVD (254 aa)) is the Glutamine amidotransferase type-1 domain. Cys1138 (nucleophile) is an active-site residue. Active-site residues include His1263 and Glu1265.

In the N-terminal section; belongs to the FGAMS family. As to quaternary structure, monomer.

The protein resides in the cytoplasm. The catalysed reaction is N(2)-formyl-N(1)-(5-phospho-beta-D-ribosyl)glycinamide + L-glutamine + ATP + H2O = 2-formamido-N(1)-(5-O-phospho-beta-D-ribosyl)acetamidine + L-glutamate + ADP + phosphate + H(+). It participates in purine metabolism; IMP biosynthesis via de novo pathway; 5-amino-1-(5-phospho-D-ribosyl)imidazole from N(2)-formyl-N(1)-(5-phospho-D-ribosyl)glycinamide: step 1/2. Its function is as follows. Phosphoribosylformylglycinamidine synthase involved in the purines biosynthetic pathway. Catalyzes the ATP-dependent conversion of formylglycinamide ribonucleotide (FGAR) and glutamine to yield formylglycinamidine ribonucleotide (FGAM) and glutamate. The sequence is that of Phosphoribosylformylglycinamidine synthase from Pseudomonas aeruginosa (strain ATCC 15692 / DSM 22644 / CIP 104116 / JCM 14847 / LMG 12228 / 1C / PRS 101 / PAO1).